A 125-amino-acid chain; its full sequence is UPF0102 protein PSPA7_4996 (125 aa).

The protein belongs to the UPF0102 family.

The polypeptide is UPF0102 protein PSPA7_4996 (Pseudomonas paraeruginosa (strain DSM 24068 / PA7) (Pseudomonas aeruginosa (strain PA7))).